The following is a 441-amino-acid chain: Aminopeptidase C (441 aa).

Residues Cys-70, His-361, and Asn-382 contribute to the active site.

Belongs to the peptidase C1 family.

It catalyses the reaction Inactivates bleomycin B2 (a cytotoxic glycometallopeptide) by hydrolysis of a carboxyamide bond of beta-aminoalanine, but also shows general aminopeptidase activity. The specificity varies somewhat with source, but amino acid arylamides of Met, Leu and Ala are preferred.. This chain is Aminopeptidase C (pepC), found in Listeria innocua serovar 6a (strain ATCC BAA-680 / CLIP 11262).